A 298-amino-acid polypeptide reads, in one-letter code: MTYRECVLEVARDDAEALSEALFDLGALSVSVEDADADTPDEEPLFGEPGHEPTRLAWNRSRVVALLGDDADPALLVAAAANAIGLSAAPAYTVREVEEQDWVRLTQSQFEPIHIGEHIWVVPSWHDAPQPEAVVLELDPGLAFGTGSHPTTRLCMEWLEQHVQPGERTLDYGCGSGILAIVAKKLGTGETVGVDIDPNAVEASRYNAERNRVEAGFSLPGDAPEGTFDLVVANILSNPLKLMASMLCARVRPGGRLVLSGVLERQAEDVAAAYADAIPLSVWRARDGWVCLHGVKPA.

The S-adenosyl-L-methionine site is built by threonine 152, glycine 173, aspartate 195, and asparagine 234.

The protein belongs to the methyltransferase superfamily. PrmA family.

The protein localises to the cytoplasm. The catalysed reaction is L-lysyl-[protein] + 3 S-adenosyl-L-methionine = N(6),N(6),N(6)-trimethyl-L-lysyl-[protein] + 3 S-adenosyl-L-homocysteine + 3 H(+). In terms of biological role, methylates ribosomal protein L11. In Ralstonia nicotianae (strain ATCC BAA-1114 / GMI1000) (Ralstonia solanacearum), this protein is Ribosomal protein L11 methyltransferase.